A 525-amino-acid chain; its full sequence is Probable protein kinase UbiB (525 aa).

One can recognise a Protein kinase domain in the interval 118-500; the sequence is EFERVPVASA…QRRTNRLLQA (383 aa). Residues 124-132 and K150 each bind ATP; that span reads VASASIAQV. D285 (proton acceptor) is an active-site residue. A helical transmembrane segment spans residues 501-521; it reads LLVFGLAVGAGAVIARVLIVL.

The protein belongs to the ABC1 family. UbiB subfamily.

It localises to the cell inner membrane. It functions in the pathway cofactor biosynthesis; ubiquinone biosynthesis [regulation]. Functionally, is probably a protein kinase regulator of UbiI activity which is involved in aerobic coenzyme Q (ubiquinone) biosynthesis. This chain is Probable protein kinase UbiB, found in Burkholderia mallei (strain SAVP1).